We begin with the raw amino-acid sequence, 232 residues long: Phosphatidylserine decarboxylase proenzyme (232 aa).

Ser-190 acts as the Schiff-base intermediate with substrate; via pyruvic acid in catalysis. Residue Ser-190 is modified to Pyruvic acid (Ser); by autocatalysis.

Belongs to the phosphatidylserine decarboxylase family. PSD-A subfamily. Heterodimer of a large membrane-associated beta subunit and a small pyruvoyl-containing alpha subunit. The cofactor is pyruvate. Is synthesized initially as an inactive proenzyme. Formation of the active enzyme involves a self-maturation process in which the active site pyruvoyl group is generated from an internal serine residue via an autocatalytic post-translational modification. Two non-identical subunits are generated from the proenzyme in this reaction, and the pyruvate is formed at the N-terminus of the alpha chain, which is derived from the carboxyl end of the proenzyme. The post-translation cleavage follows an unusual pathway, termed non-hydrolytic serinolysis, in which the side chain hydroxyl group of the serine supplies its oxygen atom to form the C-terminus of the beta chain, while the remainder of the serine residue undergoes an oxidative deamination to produce ammonia and the pyruvoyl prosthetic group on the alpha chain.

Its subcellular location is the cell membrane. The enzyme catalyses a 1,2-diacyl-sn-glycero-3-phospho-L-serine + H(+) = a 1,2-diacyl-sn-glycero-3-phosphoethanolamine + CO2. The protein operates within phospholipid metabolism; phosphatidylethanolamine biosynthesis; phosphatidylethanolamine from CDP-diacylglycerol: step 2/2. Its function is as follows. Catalyzes the formation of phosphatidylethanolamine (PtdEtn) from phosphatidylserine (PtdSer). The protein is Phosphatidylserine decarboxylase proenzyme of Brucella canis (strain ATCC 23365 / NCTC 10854 / RM-666).